A 363-amino-acid chain; its full sequence is UDP-N-acetylglucosamine--N-acetylmuramyl-(pentapeptide) pyrophosphoryl-undecaprenol N-acetylglucosamine transferase (363 aa).

UDP-N-acetyl-alpha-D-glucosamine is bound by residues 14–16, arginine 171, serine 200, and glutamine 290; that span reads TGG.

This sequence belongs to the glycosyltransferase 28 family. MurG subfamily.

The protein localises to the cell inner membrane. It carries out the reaction di-trans,octa-cis-undecaprenyl diphospho-N-acetyl-alpha-D-muramoyl-L-alanyl-D-glutamyl-meso-2,6-diaminopimeloyl-D-alanyl-D-alanine + UDP-N-acetyl-alpha-D-glucosamine = di-trans,octa-cis-undecaprenyl diphospho-[N-acetyl-alpha-D-glucosaminyl-(1-&gt;4)]-N-acetyl-alpha-D-muramoyl-L-alanyl-D-glutamyl-meso-2,6-diaminopimeloyl-D-alanyl-D-alanine + UDP + H(+). Its pathway is cell wall biogenesis; peptidoglycan biosynthesis. Its function is as follows. Cell wall formation. Catalyzes the transfer of a GlcNAc subunit on undecaprenyl-pyrophosphoryl-MurNAc-pentapeptide (lipid intermediate I) to form undecaprenyl-pyrophosphoryl-MurNAc-(pentapeptide)GlcNAc (lipid intermediate II). The chain is UDP-N-acetylglucosamine--N-acetylmuramyl-(pentapeptide) pyrophosphoryl-undecaprenol N-acetylglucosamine transferase from Borreliella afzelii (strain PKo) (Borrelia afzelii).